The chain runs to 298 residues: Syntaxin-4 (298 aa).

Over 1–274 (MRDRTHELRQ…NQKKARKKKV (274 aa)) the chain is Cytoplasmic. Residues Ser15, Ser29, Ser35, Ser36, Ser117, Ser208, and Ser248 each carry the phosphoserine modification. Positions 38–163 (DDEFFQKVQT…ERIRRQLKIT (126 aa)) form a coiled coil. The interaction with CENPF stretch occupies residues 154-298 (ERIRRQLKIT…VIIGITITVG (145 aa)). Positions 200 to 262 (LNEISARHSE…ERGQEHVKIA (63 aa)) constitute a t-SNARE coiled-coil homology domain. The chain crosses the membrane as a helical; Anchor for type IV membrane protein span at residues 275-295 (MIAICVSVTVLILAVIIGITI). Residues 296-298 (TVG) are Extracellular-facing.

It belongs to the syntaxin family. Found in a complex with VAMP8 and SNAP23. Detected in a complex with SNAP23 and STXBP4. Interacts with SNAP23 and SNAPIN. Interacts with VAMP2. Interacts with LLGL1. Interacts (via C-terminus) with CENPF. Interacts with DOC2B. Interacts with STXBP3; excludes interaction with DOC2B and SNAP25. Interacts with STXBP4; excludes interaction with VAMP2. Component of the SNARE complex composed of STX4, SNAP23 and VAMP7 that interacts with SYT7 during lysosomal exocytosis. Interacts with STXBP6. Interacts with STXBP5L. As to expression, expressed in all tissues tested including adipose, brain, testis, intestine, liver, heart, spleen, skeletal muscle and kidney.

Its subcellular location is the cell membrane. It is found in the cell projection. It localises to the neuron projection. The protein resides in the stereocilium. Functionally, plasma membrane t-SNARE that mediates docking of transport vesicles. Necessary for the translocation of SLC2A4 from intracellular vesicles to the plasma membrane. In neurons, recruited at neurite tips to membrane domains rich in the phospholipid 1-oleoyl-2-palmitoyl-PC (OPPC) which promotes neurite tip surface expression of the dopamine transporter SLC6A3/DAT by facilitating fusion of SLC6A3-containing transport vesicles with the plasma membrane. Together with STXB3 and VAMP2, may also play a role in docking/fusion of intracellular GLUT4-containing vesicles with the cell surface in adipocytes and in docking of synaptic vesicles at presynaptic active zones. Required for normal hearing. The polypeptide is Syntaxin-4 (Stx4) (Rattus norvegicus (Rat)).